Here is a 386-residue protein sequence, read N- to C-terminus: Homogentisate solanesyltransferase, chloroplastic (386 aa).

The transit peptide at Met-1–Arg-69 directs the protein to the chloroplast. Transmembrane regions (helical) follow at residues Val-130–Ile-150, Leu-181–Ile-201, Leu-204–Leu-220, Phe-225–Val-245, Trp-259–Ile-279, Ile-306–Phe-326, Ser-335–Leu-355, and Ile-365–Phe-385.

This sequence belongs to the UbiA prenyltransferase family.

Its subcellular location is the plastid. It localises to the chloroplast membrane. It catalyses the reaction all-trans-nonaprenyl diphosphate + homogentisate + H(+) = 2-methyl-6-(all-trans-nonaprenyl)benzene-1,4-diol + CO2 + diphosphate. Its activity is regulated as follows. Inhibited by haloxydine (3,5-dichloro-2,6-difluoro-4-haloxypyridine). Its function is as follows. Involved in the synthesis of plastoquinone-9. Can use both homogentisic acid and 2,5-dihydroxyphenylacetic acid gamma-lactone as prenyl acceptors, and solanesyl diphosphate &gt; farnesyl diphosphate &gt; geranylgeranyl diphosphate &gt;&gt; phytyl diphosphate as prenyl donors. Do not catalyze the decardoxylation of homogentisate uncoupled from prenylation. This chain is Homogentisate solanesyltransferase, chloroplastic (HST), found in Arabidopsis thaliana (Mouse-ear cress).